Reading from the N-terminus, the 540-residue chain is Membrane protein insertase YidC (540 aa).

A helical transmembrane segment spans residues 6–26 (NILLIALALVSFLLFQQWQVA). Positions 36–47 (QAQSSSSLPAPS) are enriched in low complexity. Residues 36-63 (QAQSSSSLPAPSFADELDPVPGQQQASA) form a disordered region. A run of 4 helical transmembrane segments spans residues 342–362 (AFIQ…TFIV), 417–437 (LGGC…YWAL), 455–475 (LSAQ…MFLI), and 496–516 (PVMF…YWLV).

The protein belongs to the OXA1/ALB3/YidC family. Type 1 subfamily. Interacts with the Sec translocase complex via SecD. Specifically interacts with transmembrane segments of nascent integral membrane proteins during membrane integration.

Its subcellular location is the cell inner membrane. In terms of biological role, required for the insertion and/or proper folding and/or complex formation of integral membrane proteins into the membrane. Involved in integration of membrane proteins that insert both dependently and independently of the Sec translocase complex, as well as at least some lipoproteins. Aids folding of multispanning membrane proteins. This Vibrio parahaemolyticus serotype O3:K6 (strain RIMD 2210633) protein is Membrane protein insertase YidC.